Consider the following 148-residue polypeptide: Large ribosomal subunit protein uL15 (148 aa).

The segment at 18–38 (GYGRVGKHRKHPGGRGNAGGL) is disordered.

This sequence belongs to the universal ribosomal protein uL15 family.

This Dictyostelium discoideum (Social amoeba) protein is Large ribosomal subunit protein uL15 (rpl27a).